The chain runs to 281 residues: Ribosomal RNA small subunit methyltransferase I (281 aa).

The protein belongs to the methyltransferase superfamily. RsmI family.

It localises to the cytoplasm. It carries out the reaction cytidine(1402) in 16S rRNA + S-adenosyl-L-methionine = 2'-O-methylcytidine(1402) in 16S rRNA + S-adenosyl-L-homocysteine + H(+). Catalyzes the 2'-O-methylation of the ribose of cytidine 1402 (C1402) in 16S rRNA. The polypeptide is Ribosomal RNA small subunit methyltransferase I (Erythrobacter litoralis (strain HTCC2594)).